We begin with the raw amino-acid sequence, 356 residues long: Tyrosine recombinase XerS (356 aa).

The Core-binding (CB) domain maps to 16 to 121; that stretch reads LMPWYVLEYY…ALSSLYKYLT (106 aa). The region spanning 169-354 is the Tyr recombinase domain; sequence EFLEYVDCEY…VNDEQKNALD (186 aa). Catalysis depends on residues Arg210, Lys234, His306, Arg309, and His332. The active-site O-(3'-phospho-DNA)-tyrosine intermediate is Tyr341.

This sequence belongs to the 'phage' integrase family. XerS subfamily.

The protein resides in the cytoplasm. FtsK is required for recombination. Functionally, site-specific tyrosine recombinase, which acts by catalyzing the cutting and rejoining of the recombining DNA molecules. Essential to convert dimers of the bacterial chromosome into monomers to permit their segregation at cell division. The sequence is that of Tyrosine recombinase XerS from Streptococcus mutans serotype c (strain ATCC 700610 / UA159).